The following is a 423-amino-acid chain: Citrate synthase-like protein clz17 (423 aa).

Catalysis depends on residues H357 and D413.

This sequence belongs to the citrate synthase family.

Its pathway is secondary metabolite biosynthesis. Its function is as follows. Citrate synthase-like protein; part of the gene cluster that mediates the biosynthesis of squalestatin S1 (SQS1, also known as zaragozic acid A), a heavily oxidized fungal polyketide that offers potent cholesterol lowering activity by targeting squalene synthase (SS). SQS1 is composed of a 2,8-dioxobicyclic[3.2.1]octane-3,4,5-tricarboxyclic acid core that is connected to two lipophilic polyketide arms. These initial steps feature the priming of an unusual benzoic acid starter unit onto the highly reducing polyketide synthase clz14, followed by oxaloacetate extension and product release to generate a tricarboxylic acid containing product. The phenylalanine ammonia lyase (PAL) clz10 and the acyl-CoA ligase clz12 are involved in transforming phenylalanine into benzoyl-CoA. The citrate synthase-like protein clz17 is involved in connecting the C-alpha-carbons of the hexaketide chain and oxaloacetate to afford the tricarboxylic acid unit. The potential hydrolytic enzymes, clz11 and clz13, are in close proximity to pks2 and may participate in product release. On the other side, the tetraketide arm is synthesized by a the squalestatin tetraketide synthase clz2 and enzymatically esterified to the core in the last biosynthetic step, by the acetyltransferase clz6. The biosynthesis of the tetraketide must involve 3 rounds of chain extension. After the first and second rounds methyl-transfer occurs, and in all rounds of extension the ketoreductase and dehydratase are active. The enoyl reductase and C-MeT of clz2 are not active in the final round of extension. The acetyltransferase clz6 appears to have a broad substrate selectivity for its acyl CoA substrate, allowing the in vitro synthesis of novel squalestatins. The biosynthesis of SQS1 requires several oxidative steps likely performed by oxidoreductases clz3, clz15 and clz16. Finally, in support of the identification of the cluster as being responsible for SQS1 production, the cluster contains a gene encoding a putative squalene synthase (SS) clz20, suggesting a likely mechanism for self-resistance. This is Citrate synthase-like protein clz17 from Cochliobolus lunatus (Filamentous fungus).